We begin with the raw amino-acid sequence, 452 residues long: Friend leukemia integration 1 transcription factor (452 aa).

Serine 39 is subject to Phosphoserine. The 87-residue stretch at proline 112–serine 198 folds into the PNT domain. The span at tyrosine 202 to leucine 214 shows a compositional bias: polar residues. The interval tyrosine 202–arginine 272 is disordered. Residues asparagine 215–arginine 226 are compositionally biased toward basic and acidic residues. Residues glutamine 248–arginine 257 are compositionally biased toward polar residues. Positions isoleucine 281–aspartate 361 form a DNA-binding region, ETS.

This sequence belongs to the ETS family. As to quaternary structure, can form homodimers or heterodimers with ETV6/TEL1.

It localises to the nucleus. Functionally, sequence-specific transcriptional activator. Recognizes the DNA sequence 5'-C[CA]GGAAGT-3'. The polypeptide is Friend leukemia integration 1 transcription factor (FLI1) (Bos taurus (Bovine)).